We begin with the raw amino-acid sequence, 420 residues long: Diaminobutyrate--2-oxoglutarate transaminase (420 aa).

Lys-271 carries the post-translational modification N6-(pyridoxal phosphate)lysine.

It belongs to the class-III pyridoxal-phosphate-dependent aminotransferase family. The cofactor is pyridoxal 5'-phosphate.

The enzyme catalyses L-2,4-diaminobutanoate + 2-oxoglutarate = L-aspartate 4-semialdehyde + L-glutamate. Its pathway is amine and polyamine biosynthesis; ectoine biosynthesis; L-ectoine from L-aspartate 4-semialdehyde: step 1/3. Functionally, catalyzes reversively the conversion of L-aspartate beta-semialdehyde (ASA) to L-2,4-diaminobutyrate (DABA) by transamination with L-glutamate. This is Diaminobutyrate--2-oxoglutarate transaminase (ectB) from Streptomyces anulatus (Streptomyces chrysomallus).